The following is a 427-amino-acid chain: Gamma-glutamyl phosphate reductase (427 aa).

Belongs to the gamma-glutamyl phosphate reductase family.

The protein resides in the cytoplasm. It catalyses the reaction L-glutamate 5-semialdehyde + phosphate + NADP(+) = L-glutamyl 5-phosphate + NADPH + H(+). It functions in the pathway amino-acid biosynthesis; L-proline biosynthesis; L-glutamate 5-semialdehyde from L-glutamate: step 2/2. Functionally, catalyzes the NADPH-dependent reduction of L-glutamate 5-phosphate into L-glutamate 5-semialdehyde and phosphate. The product spontaneously undergoes cyclization to form 1-pyrroline-5-carboxylate. The protein is Gamma-glutamyl phosphate reductase of Rhizobium rhizogenes (strain K84 / ATCC BAA-868) (Agrobacterium radiobacter).